The sequence spans 273 residues: Large ribosomal subunit protein uL2 (273 aa).

Disordered stretches follow at residues 35 to 54 and 222 to 273; these read DSKSKSGGRNNNGRITTRHI and GMAM…RRNK. Over residues 39 to 49 the composition is skewed to polar residues; it reads KSGGRNNNGRI. Over residues 229 to 239 the composition is skewed to basic and acidic residues; it reads DHPHGGGEGRN. The segment covering 253–273 has biased composition (basic residues); it reads KGFKTRKNKRTDKYIVRRRNK.

Belongs to the universal ribosomal protein uL2 family. In terms of assembly, part of the 50S ribosomal subunit. Forms a bridge to the 30S subunit in the 70S ribosome.

Its function is as follows. One of the primary rRNA binding proteins. Required for association of the 30S and 50S subunits to form the 70S ribosome, for tRNA binding and peptide bond formation. It has been suggested to have peptidyltransferase activity; this is somewhat controversial. Makes several contacts with the 16S rRNA in the 70S ribosome. This is Large ribosomal subunit protein uL2 from Aeromonas salmonicida (strain A449).